The following is a 317-amino-acid chain: UV DNA damage endonuclease (317 aa).

The protein belongs to the uve1/UvsE family.

Component in a DNA repair pathway. Removal of UV LIGHT damaged nucleotides. Recognizes pyrimidine dimers and cleave a phosphodiester bond immediately 5' to the lesion. This is UV DNA damage endonuclease from Bacillus cereus (strain 03BB102).